The sequence spans 101 residues: MDPQSAIYTLPRVPTAAPTTGGVSWSHVGEVAILSFVALICIYLLYLWVLRDLILVLKARRGRSTEELIFGSEAVDRRHPIPNTLEPTAPVHPGPFVPGQG.

Residues 30–50 traverse the membrane as a helical segment; sequence EVAILSFVALICIYLLYLWVL. Positions 80–101 are disordered; sequence PIPNTLEPTAPVHPGPFVPGQG. Positions 90 to 101 are enriched in pro residues; that stretch reads PVHPGPFVPGQG.

The protein belongs to the mastrevirus movement protein family. Interacts with the capsid protein (CP). Part of a MP-CP-viral DNA complex.

Its subcellular location is the host membrane. In terms of biological role, involved in the viral transport within, and between cells. In Avena sativa (Oat), this protein is Movement protein.